Consider the following 208-residue polypeptide: Casparian strip membrane protein 2 (208 aa).

The interval 1 to 23 (MDSKSGRSESAINIPESNSTKHK) is disordered. Residues 1-46 (MDSKSGRSESAINIPESNSTKHKSTVVHTATKVAAVAPRGGGWRRG) lie on the Cytoplasmic side of the membrane. Positions 8–18 (SESAINIPESN) are enriched in polar residues. A helical transmembrane segment spans residues 47 to 67 (VSIFDFILRICALAAALAATA). Residues 68–96 (TMGTTDQTLPFFTQFFQFQASYDDLPAFT) lie on the Extracellular side of the membrane. Residues 97–117 (FFVVANGIASGYLVLSLPFSI) traverse the membrane as a helical segment. At 118–129 (ATIVRPHAAAIK) the chain is on the cytoplasmic side. The helical transmembrane segment at 130-150 (LLLIIFDTVMVAFTAAAAAAA) threads the bilayer. Over 151–184 (AAIVYLAHNGNSKTNWFAICQQFNDFCQRVSGAV) the chain is Extracellular. Residues 185–205 (VASFVAAVILIFLVVLSAVAI) traverse the membrane as a helical segment. Residues 206 to 208 (RKH) are Cytoplasmic-facing.

It belongs to the Casparian strip membrane proteins (CASP) family. Homodimer and heterodimers.

It is found in the cell membrane. In terms of biological role, regulates membrane-cell wall junctions and localized cell wall deposition. Required for establishment of the Casparian strip membrane domain (CSD) and the subsequent formation of Casparian strips, a cell wall modification of the root endodermis that determines an apoplastic barrier between the intraorganismal apoplasm and the extraorganismal apoplasm and prevents lateral diffusion. This Triphysaria pusilla (Dwarf owl's-clover) protein is Casparian strip membrane protein 2.